Here is a 1174-residue protein sequence, read N- to C-terminus: Fanconi anemia group J protein homolog (1174 aa).

The region spanning 11–445 is the Helicase ATP-binding domain; the sequence is GGVKIHFPCR…KSHEPLRDVC (435 aa). Residues 101–126 show a composition bias toward polar residues; that stretch reads NLDTSPHFNSPSKPSSGRNGVSTPCQ. Disordered regions lie at residues 101–160 and 187–208; these read NLDT…EKKR and LASE…DRKD. Residues 134 to 143 are compositionally biased toward low complexity; the sequence is LAAKLSAKKQ. The short motif at 158–175 is the Nuclear localization signal element; that stretch reads KKRIRPLETTQQIRKRHC. Residue 185-192 coordinates ATP; the sequence is ARLASEKR. [4Fe-4S] cluster contacts are provided by cysteine 286, cysteine 301, cysteine 313, and cysteine 353. Positions 393–396 match the DEAH box motif; it reads VILD. Residues 888–1063 form an interaction with BRCA1 region; sequence SRRHQKVTNR…SNETADTSLG (176 aa). Composition is skewed to polar residues over residues 923 to 935 and 990 to 1001; these read TSVS…SPEN and SRSSSPTFGKQT. Disordered regions lie at residues 923-1001 and 1102-1155; these read TSVS…GKQT and LSPG…SSHS. Phosphoserine is present on residues serine 929, serine 932, and serine 994. The segment covering 1138–1147 has biased composition (acidic residues); it reads DTNEENGELV. Lysine 1174 bears the N6-acetyllysine mark.

It belongs to the DEAD box helicase family. DEAH subfamily. As to quaternary structure, binds directly to the BRCT domains of BRCA1. Interacts with the CIA complex components CIAO1, CIAO2B and MMS19. The cofactor is [4Fe-4S] cluster. Phosphorylated. Phosphorylation is necessary for interaction with BRCA1, and is cell-cycle regulated.

It is found in the nucleus. Its subcellular location is the cytoplasm. The enzyme catalyses Couples ATP hydrolysis with the unwinding of duplex DNA at the replication fork by translocating in the 5'-3' direction. This creates two antiparallel DNA single strands (ssDNA). The leading ssDNA polymer is the template for DNA polymerase III holoenzyme which synthesizes a continuous strand.. It catalyses the reaction ATP + H2O = ADP + phosphate + H(+). Its function is as follows. DNA-dependent helicase and 5' to 3' DNA helicase required for the maintenance of chromosomal stability. Acts late in the Fanconi anemia pathway, after FANCD2 ubiquitination. Involved in the repair of DNA double-strand breaks by homologous recombination in a manner that depends on its association with BRCA1. Involved in the repair of abasic sites at replication forks by promoting the degradation of DNA-protein cross-links: acts by catalyzing unfolding of HMCES DNA-protein cross-link via its helicase activity, exposing the underlying DNA and enabling cleavage of the DNA-protein adduct by the SPRTN metalloprotease. Can unwind RNA:DNA hybrids and G-quadruplex DNA. This is Fanconi anemia group J protein homolog from Mus musculus (Mouse).